The following is a 196-amino-acid chain: MSIIPVTRVQRTTLIAILSAISFGLMLFPQVPIIPSADFLKLDFSIVPVVIGLYWLNYSASLWVILIRTLLKLILANEGVNTYLGLPVNLLVVLAFITVLKITMPNLEQYSNWQKKILPLISSTFVMTIVAIVINWFVAIPLYARFANFDIAKFIGLKNYFIGMVLPFNLIEGIIWFVVSMIILRAIQPLQRRFHS.

Transmembrane regions (helical) follow at residues 14 to 34 (LIAI…VPII), 46 to 66 (IVPV…WVIL), 80 to 100 (VNTY…ITVL), 120 to 140 (LISS…FVAI), and 164 to 184 (MVLP…MIIL).

This sequence belongs to the prokaryotic riboflavin transporter (P-RFT) (TC 2.A.87) family. In E.coli forms a stable energy-coupling factor (ECF) transporter complex probably composed of a membrane-embedded substrate-binding protein (S component), 2 ATP-binding proteins (A components) and 2 transmembrane proteins (T component). May be able to interact with more than 1 S component at a time.

The protein resides in the cell membrane. Functionally, probable riboflavin-binding protein that interacts with the energy-coupling factor (ECF) ABC-transporter complex. Unlike classic ABC transporters this ECF transporter provides the energy necessary to transport a number of different substrates. The substrates themselves are bound by transmembrane, not extracytoplasmic soluble proteins and transport it into cells. This chain is Riboflavin transporter RibU (ribU), found in Leuconostoc mesenteroides subsp. mesenteroides (strain ATCC 8293 / DSM 20343 / BCRC 11652 / CCM 1803 / JCM 6124 / NCDO 523 / NBRC 100496 / NCIMB 8023 / NCTC 12954 / NRRL B-1118 / 37Y).